Here is a 1905-residue protein sequence, read N- to C-terminus: Transport and Golgi organization protein 1 homolog (1905 aa).

Positions 1-22 (MAAAQGLLFWLLLLGPPCRVPG) are cleaved as a signal peptide. Over 23–1141 (QPEQDPGRRF…EPASVTPLEN (1119 aa)) the chain is Lumenal. The SH3 domain occupies 45 to 107 (MLMYRGEALE…PKDLIQVVHE (63 aa)). Basic and acidic residues predominate over residues 154-167 (SEKVKEKTAQRVEE). Disordered regions lie at residues 154–259 (SEKV…HEQE) and 313–621 (TVGK…IKDR). N173 carries N-linked (GlcNAc...) asparagine glycosylation. Residues 173–190 (NESDAEPEPGEPNSEESE) show a composition bias toward acidic residues. The segment covering 198-208 (AELRERSEAQK) has biased composition (basic and acidic residues). Residues 209–220 (SHPQVNSQTGHA) show a composition bias toward polar residues. S226 and S229 each carry phosphoserine. Over residues 234–245 (LQDKLKVPDSEN) the composition is skewed to basic and acidic residues. N-linked (GlcNAc...) asparagine glycosylation is present at N246. The segment covering 246-255 (NKTSNSSQVS) has biased composition (polar residues). A compositionally biased stretch (acidic residues) spans 317–327 (EEEENKEDFDE). Basic and acidic residues-rich tracts occupy residues 337–366 (EDTKSPGHSGIEKHPTEKEQNSNKEHKVEE) and 373–386 (KKGDKEIPKHREDT). The segment covering 392–414 (MEGEENTDTDLESSDSKEEDDPL) has biased composition (acidic residues). Basic and acidic residues-rich tracts occupy residues 419 to 436 (RLGKPRPEDHTDPEKAAD) and 459 to 480 (HMKDKGRKVEEPRRDWVQHEVG). The stretch at 467–527 (VEEPRRDWVQ…ANQENDLKGA (61 aa)) forms a coiled coil. Polar residues predominate over residues 488–500 (DQAVQGSSQSGHL). A compositionally biased stretch (basic and acidic residues) spans 531 to 542 (ISKEMLHEEKPS). The N-linked (GlcNAc...) asparagine glycan is linked to N627. Disordered stretches follow at residues 657–908 (QQGG…PHAP), 1036–1059 (APPAAAQPVEGGWDGPAEDTQPPL), and 1085–1118 (PVTRDMGTSGVAQKPQTEEDGDPGIITPQGTPVD). The segment covering 669-714 (VSEKRELPEEEVTRVTKDASDEGQEVRKTGQTDSIEGRGFRPKEPN) has biased composition (basic and acidic residues). Residues 715–730 (PEDEDYSPEELLEDEN) show a composition bias toward acidic residues. 4 stretches are compositionally biased toward basic and acidic residues: residues 736–751 (QSKERSPEIQDKRLDV), 766–789 (TDPETEKNKEETRHVSENERKNET), 842–859 (SQKKDPDYLKEDNHEGHP), and 868–884 (PGVEPSKEDDEHAEKFV). Phosphoserine is present on S873. Residues 1142–1162 (AIAFIYSLVFHLTKTLLATLP) lie within the membrane without spanning it. At 1163 to 1173 (DDVQPGPDFYG) the chain is on the lumenal side. The helical transmembrane segment at 1174-1194 (LPWKPVLITASLGIVSFAVFF) threads the bilayer. At 1195 to 1905 (WRTVLAVKSR…DCSPALKQSP (711 aa)) the chain is on the cytoplasmic side. The segment at 1208-1647 (VTEQQISEKL…VIVKPMPGRP (440 aa)) is mediates interaction with MIA2. Positions 1211-1393 (QQISEKLKNI…SQKDLEVALT (183 aa)) form a coiled coil. The segment at 1416–1443 (SESEDQNKGGSESDELANGEVGGDRSEK) is disordered. S1428 is subject to Phosphoserine. Residues 1484–1636 (NLEDQIKKLE…TQKMAMMQEE (153 aa)) are a coiled coil. Residues 1639 to 1905 (IVKPMPGRPN…DCSPALKQSP (267 aa)) form a disordered region. A compositionally biased stretch (polar residues) spans 1647-1664 (PNTQNPPRRGPLSQNGSF). Phosphoserine is present on residues S1663, S1675, S1703, S1724, S1738, and S1742. The tract at residues 1748 to 1905 (DEGKVSMAAK…DCSPALKQSP (158 aa)) is proline-rich domain (PRD); mediates interaction with the COPII coat subunits SEC23A and SEC23B. The span at 1776-1806 (LLPPIRYGPPPQLCGPFGPRPLPPPFGPGMR) shows a compositional bias: pro residues. R1781 bears the Asymmetric dimethylarginine mark. An SEC16A-interacting region (SIR); required for its localization to endoplasmic reticulum exit sites and for its interaction with SEC16A region spans residues 1785 to 1845 (PPQLCGPFGP…GHAPFRPLGS (61 aa)). The segment covering 1821-1831 (GKRDLPLDPRE) has biased composition (basic and acidic residues). Phosphoserine occurs at positions 1890 and 1904. Residues 1891–1905 (QGASQDCSPALKQSP) show a composition bias toward polar residues.

Belongs to the MIA/OTOR family. Tango1 subfamily. In terms of assembly, interacts with MIA2. Interacts (via SH3 domain) with COL7A1. Interacts with the COPII coat subunits SEC23A, SEC23B and maybe SEC24C. May interact with APOB and MIA2. Interacts with SEC16A.

It is found in the endoplasmic reticulum membrane. Plays a role in the transport of cargos that are too large to fit into COPII-coated vesicles and require specific mechanisms to be incorporated into membrane-bound carriers and exported from the endoplasmic reticulum. This protein is required for collagen VII (COL7A1) secretion by loading COL7A1 into transport carriers. It may participate in cargo loading of COL7A1 at endoplasmic reticulum exit sites by binding to COPII coat subunits Sec23/24 and guiding SH3-bound COL7A1 into a growing carrier. Does not play a role in global protein secretion and is apparently specific to COL7A1 cargo loading. However, it may participate in secretion of other proteins in cells that do not secrete COL7A1. It is also specifically required for the secretion of lipoproteins by participating in their export from the endoplasmic reticulum. Required for correct assembly of COPII coat components at endoplasmic reticulum exit sites (ERES) and for the localization of SEC16A and membrane-bound ER-resident complexes consisting of MIA2 and PREB/SEC12 to ERES. The sequence is that of Transport and Golgi organization protein 1 homolog from Bos taurus (Bovine).